A 67-amino-acid chain; its full sequence is uncharacterized protein (67 aa).

The chain crosses the membrane as a helical span at residues 4-24 (WIFAILMLGVAIVLSIIATFF).

The protein localises to the membrane. This is an uncharacterized protein from Bacillus anthracis.